We begin with the raw amino-acid sequence, 380 residues long: Transcription factor SOX-7 (380 aa).

The tract at residues 24–43 (SDGLSPPAVPRPSGDKSSES) is disordered. The HMG box DNA-binding region spans 45-113 (IRRPMNAFMV…QHMQDYPNYK (69 aa)). The tract at residues 139–167 (SRDQNTLPEKNGIGRGEKEDRGEYSPGAT) is disordered. In terms of domain architecture, Sox C-terminal spans 260-380 (VSMMSSVSGC…ATYYNSYSVS (121 aa)). The interval 323–328 (EFDQYL) is required for beta-catenin-binding.

As to quaternary structure, interacts with CTNNB1/beta-catenin; this interaction may lead to the proteasomal degradation of active CTNNB1 and thus inhibition of Wnt/beta-catenin-stimulated transcription. In terms of tissue distribution, predominantly expressed in ovary, lung and heart. In the ovary, restricted to oocytes (at protein level). Present both in mesenchymal and epithelial cells in some adult tissues, including ear.

The protein resides in the nucleus. It localises to the cytoplasm. Its function is as follows. Binds to and activates the CDH5 promoter, hence plays a role in the transcriptional regulation of genes expressed in the hemogenic endothelium and blocks further differentiation into blood precursors. May be required for the survival of both hematopoietic and endothelial precursors during specification. May play a role in skeletal myogenesis and up-regulate the expression of muscle markers, such as PAX3/PAX7 and Meox1. Competes with GATA4 for binding and activation of the FGF3 promoter. Represses Wnt/beta-catenin-stimulated transcription. Probably acts by targeting CTNNB1 to proteasomal degradation. Binds the DNA sequence 5'-AACAAT-3'. In Mus musculus (Mouse), this protein is Transcription factor SOX-7 (Sox7).